We begin with the raw amino-acid sequence, 335 residues long: DNA-directed RNA polymerase subunit alpha (335 aa).

Positions 1–233 are alpha N-terminal domain (alpha-NTD); sequence MIRDEISVSI…DLFIPFLHGE (233 aa). Residues 264–335 form an alpha C-terminal domain (alpha-CTD) region; the sequence is KEKIAFQLIF…KLFAIDPPRN (72 aa).

This sequence belongs to the RNA polymerase alpha chain family. In terms of assembly, in plastids the minimal PEP RNA polymerase catalytic core is composed of four subunits: alpha, beta, beta', and beta''. When a (nuclear-encoded) sigma factor is associated with the core the holoenzyme is formed, which can initiate transcription.

The protein localises to the plastid. Its subcellular location is the chloroplast. It catalyses the reaction RNA(n) + a ribonucleoside 5'-triphosphate = RNA(n+1) + diphosphate. Its function is as follows. DNA-dependent RNA polymerase catalyzes the transcription of DNA into RNA using the four ribonucleoside triphosphates as substrates. This chain is DNA-directed RNA polymerase subunit alpha, found in Pinus thunbergii (Japanese black pine).